Consider the following 926-residue polypeptide: MPLRLEIKRKLAQRSERVKSVDLHPTEPWILASLYSGTLCIWNYQTQVMAKSFEVTELPVRSAKFVARKQWVVAGADDMYIRVYNYNTMDKVKVFEAHSDYIRCVAVHPTLPYVLSSSDDMLIKLWDWEKGWACTQIFEGHSHYVMQVTFNPKDTNTFASASLDRTIKIWNLGSPDPNFTLDAHQKGVNCVDYFTGGDKPYLITGSDDHTAKVWDYQTKSCVQTLEGHTHNVSAVCFHPELPIIITGSEDGTVRIWHATTYRLENTLNYGLERVWAIGYIKSSRRVVIGYDEGTIMVKLGREIPVASMDNTGKIIWAKHNEIQTANIKSIGADYEVTDGERLPLSVKELGTCDLYPQSLKHNPNGRFVVVCGDGEYIIYTALAWRNRSFGSGLEFVWSSEGECAVRESSSKIKIFSKNFQEKRSIRPTFSAEKIFGGTLLAMCSSDFICFYDWAECRLIQRIDVTVKNLYWADSGDLVAIASDTSFYILKFNRDLVTSHFDSGRPTEEEGVEDAFEVLHENDERVRTGIWVGDCFIYNNSSWKLNYCVGGEVTTMYHLDRPMYLLGYLASQSRVFLVDKEFNVIGYTLLLSLIEYKTLVMRGDLDKASEILPTIPKDQHNSVAHFLESRGMIEDALEIATDPDYRFELAIQLGRLEIAQEIAVEVQSESKWKQLGELAMSSGKLQMAEECMKYAMDLSGLLLLYSSLGDAEGVTKLATLAKEQGKNNVAFLCLFMLGKLEDCLQLLVESNRIPEAALMARSYLPSKVSEIVALWRKDLSKVNSKAAESLADPEEYSNLFEDWQVALSVEAKAVETRGVYTGAKDYPSHADKSSMTLVEAFRNLQVEEEESLENGDMDHEEVVAEENGNEQRNEDDVAEHVEEHHEEKEAEEEEGIVDGDSTDGAVLVNGSEADEEWGTNNEGNPSA.

WD repeat units follow at residues 13 to 52, 55 to 94, 97 to 136, 140 to 180, 183 to 224, 227 to 266, 269 to 309, 351 to 390, and 461 to 501; these read QRSE…MAKS, VTEL…KVKV, AHSD…ACTQ, GHSH…PNFT, AHQK…CVQT, GHTH…LENT, YGLE…ASMD, TCDL…RSFG, and RIDV…SHFD. The tract at residues 847-926 is disordered; that stretch reads EEESLENGDM…GTNNEGNPSA (80 aa). The span at 868-887 shows a compositional bias: basic and acidic residues; it reads NEQRNEDDVAEHVEEHHEEK. Residues 888 to 900 are compositionally biased toward acidic residues; that stretch reads EAEEEEGIVDGDS. A compositionally biased stretch (polar residues) spans 917–926; sequence GTNNEGNPSA.

The protein belongs to the WD repeat COPB2 family. Oligomeric complex that consists of at least the alpha, beta, beta', gamma, delta, epsilon and zeta subunits.

Its subcellular location is the cytoplasm. It is found in the golgi apparatus membrane. The protein localises to the cytoplasmic vesicle. It localises to the COPI-coated vesicle membrane. In terms of biological role, the coatomer is a cytosolic protein complex that binds to dilysine motifs and reversibly associates with Golgi non-clathrin-coated vesicles, which further mediate biosynthetic protein transport from the ER, via the Golgi up to the trans Golgi network. Coatomer complex is required for budding from Golgi membranes, and is essential for the retrograde Golgi-to-ER transport of dilysine-tagged proteins. The polypeptide is Coatomer subunit beta'-2 (Arabidopsis thaliana (Mouse-ear cress)).